Consider the following 316-residue polypeptide: Phosphate acyltransferase (316 aa).

The protein belongs to the PlsX family. As to quaternary structure, homodimer. Probably interacts with PlsY.

The protein localises to the cytoplasm. The enzyme catalyses a fatty acyl-[ACP] + phosphate = an acyl phosphate + holo-[ACP]. It participates in lipid metabolism; phospholipid metabolism. In terms of biological role, catalyzes the reversible formation of acyl-phosphate (acyl-PO(4)) from acyl-[acyl-carrier-protein] (acyl-ACP). This enzyme utilizes acyl-ACP as fatty acyl donor, but not acyl-CoA. The sequence is that of Phosphate acyltransferase from Chlamydia felis (strain Fe/C-56) (Chlamydophila felis).